The chain runs to 188 residues: Elongation factor P (188 aa).

Lys34 is modified (N6-(3,6-diaminohexanoyl)-5-hydroxylysine).

The protein belongs to the elongation factor P family. Post-translationally, may be beta-lysylated on the epsilon-amino group of Lys-34 by the combined action of EpmA and EpmB, and then hydroxylated on the C5 position of the same residue by EpmC (if this protein is present). Lysylation is critical for the stimulatory effect of EF-P on peptide-bond formation. The lysylation moiety may extend toward the peptidyltransferase center and stabilize the terminal 3-CCA end of the tRNA. Hydroxylation of the C5 position on Lys-34 may allow additional potential stabilizing hydrogen-bond interactions with the P-tRNA.

The protein localises to the cytoplasm. It functions in the pathway protein biosynthesis; polypeptide chain elongation. In terms of biological role, involved in peptide bond synthesis. Alleviates ribosome stalling that occurs when 3 or more consecutive Pro residues or the sequence PPG is present in a protein, possibly by augmenting the peptidyl transferase activity of the ribosome. Modification of Lys-34 is required for alleviation. The chain is Elongation factor P from Photobacterium profundum (strain SS9).